A 33-amino-acid polypeptide reads, in one-letter code: Ferredoxin (33 aa).

In terms of domain architecture, 2Fe-2S ferredoxin-type spans 3–33 (KYKVRLLSEAEGIDVTIDSADDVYILDAAEE).

Belongs to the 2Fe2S plant-type ferredoxin family. [2Fe-2S] cluster serves as cofactor.

It localises to the plastid. It is found in the chloroplast. Ferredoxins are iron-sulfur proteins that transfer electrons in a wide variety of metabolic reactions. The protein is Ferredoxin of Porphyridium aerugineum (Red microalga).